The sequence spans 224 residues: Protein GrpE (224 aa).

Composition is skewed to polar residues over residues 1 to 16 (MSGD…NVES) and 209 to 224 (ESSS…EGDA). Disordered regions lie at residues 1-35 (MSGD…DPVV) and 203-224 (SMGP…EGDA).

It belongs to the GrpE family. Homodimer.

Its subcellular location is the cytoplasm. Participates actively in the response to hyperosmotic and heat shock by preventing the aggregation of stress-denatured proteins, in association with DnaK and GrpE. It is the nucleotide exchange factor for DnaK and may function as a thermosensor. Unfolded proteins bind initially to DnaJ; upon interaction with the DnaJ-bound protein, DnaK hydrolyzes its bound ATP, resulting in the formation of a stable complex. GrpE releases ADP from DnaK; ATP binding to DnaK triggers the release of the substrate protein, thus completing the reaction cycle. Several rounds of ATP-dependent interactions between DnaJ, DnaK and GrpE are required for fully efficient folding. The chain is Protein GrpE from Synechococcus sp. (strain CC9902).